The sequence spans 317 residues: MSQALMNTAAATAETDAAMSFKQNEKIVYENNKLHKRLCRQVGQAIGDFNMIEDGDKVMVCLSGGKDSYALLDILMTLRERAPIKFDIVAVNLDQKQPNFPDHILPAYLKQLDIPFHIENQDTYSIVKRLIPEGKTTCSLCSRLRRGILYRVADELGANKIALGHHRDDIMETFFLNMFFGAKIKGMPPKLQSDDGKHIVIRPLAYVKEADTERYAEVKNFPIIPCDLCGSQENLQRKQIKGMLREWEKKFPGRVDNIFSSLSTVVPSHLMDKELFGFADLKATGEAMANGDIAFDEEPCSTGSTSIPGIIPLRADD.

The PP-loop motif motif lies at 63 to 68; sequence SGGKDS. [4Fe-4S] cluster contacts are provided by Cys-138, Cys-141, and Cys-229.

This sequence belongs to the TtcA family. In terms of assembly, homodimer. Mg(2+) serves as cofactor. [4Fe-4S] cluster is required as a cofactor.

It is found in the cytoplasm. It carries out the reaction cytidine(32) in tRNA + S-sulfanyl-L-cysteinyl-[cysteine desulfurase] + AH2 + ATP = 2-thiocytidine(32) in tRNA + L-cysteinyl-[cysteine desulfurase] + A + AMP + diphosphate + H(+). Its pathway is tRNA modification. Catalyzes the ATP-dependent 2-thiolation of cytidine in position 32 of tRNA, to form 2-thiocytidine (s(2)C32). The sulfur atoms are provided by the cysteine/cysteine desulfurase (IscS) system. This Janthinobacterium sp. (strain Marseille) (Minibacterium massiliensis) protein is tRNA-cytidine(32) 2-sulfurtransferase.